Reading from the N-terminus, the 268-residue chain is 3-methyl-2-oxobutanoate hydroxymethyltransferase (268 aa).

Asp46 and Asp85 together coordinate Mg(2+). Residues 46-47 (DS), Asp85, and Lys114 contribute to the 3-methyl-2-oxobutanoate site. Glu116 provides a ligand contact to Mg(2+). Catalysis depends on Glu183, which acts as the Proton acceptor.

Belongs to the PanB family. Homodecamer; pentamer of dimers. It depends on Mg(2+) as a cofactor.

The protein resides in the cytoplasm. The catalysed reaction is 3-methyl-2-oxobutanoate + (6R)-5,10-methylene-5,6,7,8-tetrahydrofolate + H2O = 2-dehydropantoate + (6S)-5,6,7,8-tetrahydrofolate. It participates in cofactor biosynthesis; coenzyme A biosynthesis. Catalyzes the reversible reaction in which hydroxymethyl group from 5,10-methylenetetrahydrofolate is transferred onto alpha-ketoisovalerate to form ketopantoate. This chain is 3-methyl-2-oxobutanoate hydroxymethyltransferase, found in Sulfolobus acidocaldarius (strain ATCC 33909 / DSM 639 / JCM 8929 / NBRC 15157 / NCIMB 11770).